Consider the following 562-residue polypeptide: IRK-interacting protein (562 aa).

2 disordered regions span residues 29-61 and 303-322; these read ASLMQMKSSPSSNYSLRNPSSSSAASPASRPLP and VVSQENSGGRSSGKKNSEMP. The span at 36–61 shows a compositional bias: low complexity; sequence SSPSSNYSLRNPSSSSAASPASRPLP. Residues 246 to 306 are a coiled coil; sequence SGVEKLKREL…LREATEVVSQ (61 aa).

As to quaternary structure, interacts with IRK. Highly expressed in root tips, shoot apices and developing flowers.

The polypeptide is IRK-interacting protein (Arabidopsis thaliana (Mouse-ear cress)).